Consider the following 395-residue polypeptide: Tryptophan--tRNA ligase (395 aa).

ATP-binding positions include 8–10 (RPT) and 16–17 (GH). A 'HIGH' region motif is present at residues 9–17 (PTGKLHLGH). Positions 117 to 179 (RLTDLEKEFK…EIEPEILKRL (63 aa)) are insert. Asp-204 contacts L-tryptophan. Residues 216 to 218 (GED), Ile-254, and 261 to 265 (KMSKS) each bind ATP. The short motif at 261–265 (KMSKS) is the 'KMSKS' region element.

This sequence belongs to the class-I aminoacyl-tRNA synthetase family. As to quaternary structure, homodimer.

The protein localises to the cytoplasm. The catalysed reaction is tRNA(Trp) + L-tryptophan + ATP = L-tryptophyl-tRNA(Trp) + AMP + diphosphate + H(+). Catalyzes the attachment of tryptophan to tRNA(Trp). This Aquifex aeolicus (strain VF5) protein is Tryptophan--tRNA ligase.